Consider the following 530-residue polypeptide: Ubiquitin carboxyl-terminal hydrolase 17-like protein 22 (530 aa).

Residues 80-375 (AGLQNMGNTC…QAYVLFYIQK (296 aa)) enclose the USP domain. Residue Cys89 is the Nucleophile of the active site. The active-site Proton acceptor is the His334. 2 stretches are compositionally biased toward basic and acidic residues: residues 382–392 (SESVSRGREPR) and 398–412 (DTDR…KRDH). Disordered stretches follow at residues 382–412 (SESV…KRDH) and 476–530 (KNHH…LVCQ). The segment covering 484–495 (SSLLKLSSTTPT) has biased composition (low complexity). Positions 496-505 (HQESMNTGTL) are enriched in polar residues. The segment covering 510–524 (GRARRSKGKNKHSKR) has biased composition (basic residues).

The protein belongs to the peptidase C19 family. USP17 subfamily.

It localises to the nucleus. Its subcellular location is the endoplasmic reticulum. It carries out the reaction Thiol-dependent hydrolysis of ester, thioester, amide, peptide and isopeptide bonds formed by the C-terminal Gly of ubiquitin (a 76-residue protein attached to proteins as an intracellular targeting signal).. Functionally, deubiquitinating enzyme that removes conjugated ubiquitin from specific proteins to regulate different cellular processes that may include cell proliferation, progression through the cell cycle, apoptosis, cell migration, and the cellular response to viral infection. The protein is Ubiquitin carboxyl-terminal hydrolase 17-like protein 22 (USP17L22) of Homo sapiens (Human).